The sequence spans 428 residues: Peptidase B (428 aa).

Residues lysine 195 and aspartate 200 each coordinate Mn(2+). The active site involves lysine 207. Positions 218, 277, and 279 each coordinate Mn(2+). Residue arginine 281 is part of the active site.

This sequence belongs to the peptidase M17 family. Homohexamer. Mn(2+) is required as a cofactor.

The protein localises to the cytoplasm. The catalysed reaction is Release of an N-terminal amino acid, Xaa, from a peptide or arylamide. Xaa is preferably Glu or Asp but may be other amino acids, including Leu, Met, His, Cys and Gln.. Functionally, probably plays an important role in intracellular peptide degradation. The chain is Peptidase B from Cronobacter sakazakii (strain ATCC BAA-894) (Enterobacter sakazakii).